The sequence spans 117 residues: UPF0375 protein Y45F10C.2 (117 aa).

The N-terminal stretch at 1-20 is a signal peptide; the sequence is MNSFVSTVLLLSVTIALVSG.

The protein belongs to the UPF0375 family. As to expression, expressed in the uterine epithelium.

The protein resides in the secreted. In terms of biological role, negatively regulates the egg-laying rate by promoting retention of fertilized eggs. This Caenorhabditis elegans protein is UPF0375 protein Y45F10C.2.